The following is a 188-amino-acid chain: Peptide deformylase (188 aa).

2 residues coordinate Fe cation: Cys94 and His136. Glu137 is an active-site residue. Position 140 (His140) interacts with Fe cation.

This sequence belongs to the polypeptide deformylase family. Requires Fe(2+) as cofactor.

The enzyme catalyses N-terminal N-formyl-L-methionyl-[peptide] + H2O = N-terminal L-methionyl-[peptide] + formate. Its function is as follows. Removes the formyl group from the N-terminal Met of newly synthesized proteins. Requires at least a dipeptide for an efficient rate of reaction. N-terminal L-methionine is a prerequisite for activity but the enzyme has broad specificity at other positions. The polypeptide is Peptide deformylase (Pelodictyon phaeoclathratiforme (strain DSM 5477 / BU-1)).